Here is a 349-residue protein sequence, read N- to C-terminus: MVRAKRKLDHIEYALSTGQSRTHGFHDIEFVHQSLPNSSYETITCETKIGELSLSSPIFINAMTGGGGEKTLHINEQLAYVAKHHNLAMAVGSQMAALKDESEAASYKIIRKVNPNGIFFANLGSEATVEQAERAVDMVGANALQIHLNVIQELTMPEGDRDFTGVLQRIEKIVLNSKVPVIVKEVGFGMSKETMQQLASVGVTAIDIGGQGGTNFAAVENERRQRMLSYFNNWGIQTATSIIEATSTNNNLSFIASGGIQTALDVAKAIALGANTTAFAGYFLRILMEDGIEKLVDEIDLLHTDLKFIMTALGAKTIEELQSVPLVIKGETYHWLTQRGIDTTHYSRR.

6-7 contributes to the substrate binding site; it reads RK. FMN is bound by residues 62 to 64, Ser93, and Asn122; that span reads AMT. Position 152 (Gln152) interacts with substrate. Glu153 is a Mg(2+) binding site. FMN is bound by residues Lys184, Thr214, 258–259, and 280–281; these read GG and AG.

Belongs to the IPP isomerase type 2 family. In terms of assembly, homooctamer. Dimer of tetramers. FMN serves as cofactor. It depends on NADPH as a cofactor. The cofactor is Mg(2+).

The protein localises to the cytoplasm. It catalyses the reaction isopentenyl diphosphate = dimethylallyl diphosphate. Functionally, involved in the biosynthesis of isoprenoids. Catalyzes the 1,3-allylic rearrangement of the homoallylic substrate isopentenyl (IPP) to its allylic isomer, dimethylallyl diphosphate (DMAPP). In Bacillus cereus (strain AH820), this protein is Isopentenyl-diphosphate delta-isomerase.